The sequence spans 383 residues: Opsin Rh3 (383 aa).

Residues Met-1 to Met-57 lie on the Extracellular side of the membrane. A glycan (N-linked (GlcNAc...) asparagine) is linked at Asn-13. The helical transmembrane segment at Asn-58–Val-82 threads the bilayer. The Cytoplasmic portion of the chain corresponds to Phe-83–Asn-94. A helical transmembrane segment spans residues Ile-95–Phe-119. The Extracellular portion of the chain corresponds to His-120–Phe-133. Cys-130 and Cys-207 form a disulfide bridge. The helical transmembrane segment at Gly-134 to Tyr-153 threads the bilayer. Topologically, residues Asp-154 to Lys-171 are cytoplasmic. The chain crosses the membrane as a helical span at residues Ala-172–Gly-196. Over Arg-197–Leu-220 the chain is Extracellular. A helical membrane pass occupies residues Phe-221 to Val-248. The Cytoplasmic portion of the chain corresponds to Phe-249–Lys-284. Residues Ala-285–Ala-308 traverse the membrane as a helical segment. Topologically, residues Phe-309–Thr-316 are extracellular. The helical transmembrane segment at Pro-317–Ser-341 threads the bilayer. Position 328 is an N6-(retinylidene)lysine (Lys-328). The Cytoplasmic portion of the chain corresponds to His-342–Ala-383. A disordered region spans residues Ala-362–Ala-383. Over residues Ala-369–Ala-383 the composition is skewed to low complexity.

It belongs to the G-protein coupled receptor 1 family. Opsin subfamily. Phosphorylated on some or all of the serine and threonine residues present in the C-terminal region.

It is found in the membrane. Visual pigments are the light-absorbing molecules that mediate vision. They consist of an apoprotein, opsin, covalently linked to cis-retinal. This Drosophila melanogaster (Fruit fly) protein is Opsin Rh3 (Rh3).